Consider the following 1488-residue polypeptide: Chromosome partition protein MukB (1488 aa).

Position 34–41 (34–41 (GGNGAGKS)) interacts with ATP. Coiled-coil stretches lie at residues 326 to 418 (LEAD…QYNQ), 444 to 472 (LDTF…QTAH), and 509 to 602 (RHLA…QRAP). Residues 666-783 (PGGAEDQRLN…SLPIFGRAAR (118 aa)) form a flexible hinge region. Coiled coils occupy residues 835–923 (EAEI…AKLE), 977–1116 (EMLS…AKAG), and 1209–1265 (VEAI…LQSV). Residues 1049–1074 (ADSGAEERARQRRDELHAQLSNNRSR) form a disordered region. Basic and acidic residues predominate over residues 1051-1065 (SGAEERARQRRDELH).

The protein belongs to the SMC family. MukB subfamily. As to quaternary structure, homodimerization via its hinge domain. Binds to DNA via its C-terminal region. Interacts, and probably forms a ternary complex, with MukE and MukF via its C-terminal region. The complex formation is stimulated by calcium or magnesium. Interacts with tubulin-related protein FtsZ.

The protein localises to the cytoplasm. Its subcellular location is the nucleoid. In terms of biological role, plays a central role in chromosome condensation, segregation and cell cycle progression. Functions as a homodimer, which is essential for chromosome partition. Involved in negative DNA supercoiling in vivo, and by this means organize and compact chromosomes. May achieve or facilitate chromosome segregation by condensation DNA from both sides of a centrally located replisome during cell division. In Salmonella typhimurium (strain LT2 / SGSC1412 / ATCC 700720), this protein is Chromosome partition protein MukB.